Consider the following 91-residue polypeptide: Preprofallaxidin-2 (91 aa).

Residues 1-22 (MASLKKSLFLVLFLGLVSLSIC) form the signal peptide. The propeptide occupies 23-49 (EKEKRENEGNENEEEEENHEEGSEEKR). The disordered stretch occupies residues 24 to 49 (KEKRENEGNENEEEEENHEEGSEEKR). A compositionally biased stretch (acidic residues) spans 31-41 (GNENEEEEENH). Leucine 65 carries the leucine amide modification. Positions 69 to 73 (SEEKR) are excised as a propeptide. Leucine amide is present on leucine 89.

The protein belongs to the frog skin active peptide (FSAP) family. Dermaseptin subfamily. As to expression, expressed by the skin glands.

Its subcellular location is the secreted. Fallaxidin-3.1 shows antibacterial activity against the Gram-positive bacteria E.faecalis (MIC=100 uM) and L.lactis (MIC=100 uM). No antibacterial activity against the Gram-positive bacteria B.cereus, L.innocua, M.luteus, S.epidermidis, S.uberis and S.aureus, or the Gram-negative bacteria E.cloacae and E.coli. Functionally, fallaxidin-3.2 shows antibacterial activity against the Gram-positive bacteria E.faecalis (MIC=100 uM) and L.lactis (MIC=500 uM). No antibacterial activity against the Gram-positive bacteria B.cereus, L.innocua, M.luteus, S.epidermidis, S.uberis and S.aureus, or the Gram-negative bacteria E.cloacae and E.coli. This is Preprofallaxidin-2 from Litoria fallax (Eastern dwarf tree frog).